A 313-amino-acid polypeptide reads, in one-letter code: Ribosomal RNA small subunit methyltransferase H (313 aa).

S-adenosyl-L-methionine contacts are provided by residues 35–37, Asp-55, Phe-80, Asp-102, and Gln-109; that span reads GGH.

Belongs to the methyltransferase superfamily. RsmH family.

The protein localises to the cytoplasm. The catalysed reaction is cytidine(1402) in 16S rRNA + S-adenosyl-L-methionine = N(4)-methylcytidine(1402) in 16S rRNA + S-adenosyl-L-homocysteine + H(+). Specifically methylates the N4 position of cytidine in position 1402 (C1402) of 16S rRNA. The protein is Ribosomal RNA small subunit methyltransferase H of Shewanella baltica (strain OS223).